Consider the following 281-residue polypeptide: tRNA N(3)-cytidine methyltransferase METTL8, mitochondrial (281 aa).

A mitochondrion-targeting transit peptide spans 1–22 (MNVIWRSCICRLRQGKVPHRCQ). K80 participates in a covalent cross-link: Glycyl lysine isopeptide (Lys-Gly) (interchain with G-Cter in SUMO). S-adenosyl-L-methionine contacts are provided by W89 and Y93. Polar residues predominate over residues 139-151 (RTQGTETHCQESF). The interval 139-180 (RTQGTETHCQESFVSPEPGSRGRSAPDPDLEEYSKGPGKTEP) is disordered. Residues G194, D220, and D246 each coordinate S-adenosyl-L-methionine.

The protein belongs to the methyltransferase superfamily. METL family. Interacts with EP300. As to expression, absent in embryonic lung but is induced in a fibroblast cell line by stretch. Expressed in undifferentiated progenitor cells, while its expression is inhibited by stretch. In terms of tissue distribution, absent in undifferentiated embryonic lung mesenchymal cells, but expression is induced by stretch. As to expression, expressed in mature adipose tissue.

It is found in the mitochondrion. The protein localises to the cytoplasm. The protein resides in the nucleus. It carries out the reaction cytidine(32) in tRNA(Ser) + S-adenosyl-L-methionine = N(3)-methylcytidine(32) in tRNA(Ser) + S-adenosyl-L-homocysteine + H(+). The catalysed reaction is cytidine(32) in tRNA(Thr) + S-adenosyl-L-methionine = N(3)-methylcytidine(32) in tRNA(Thr) + S-adenosyl-L-homocysteine + H(+). The enzyme catalyses a cytidine in mRNA + S-adenosyl-L-methionine = an N(3)-methylcytidine in mRNA + S-adenosyl-L-homocysteine + H(+). Its function is as follows. Mitochondrial S-adenosyl-L-methionine-dependent methyltransferase that mediates N(3)-methylcytidine modification of residue 32 of the tRNA anticodon loop of mitochondrial tRNA(Ser)(UCN) and tRNA(Thr). N(3)-methylcytidine methylation modification regulates mitochondrial translation efficiency and is required for activity of the respiratory chain. N(3)-methylcytidine methylation of mitochondrial tRNA(Ser)(UCN) requires the formation of N(6)-dimethylallyladenosine(37) (i6A37) by TRIT1 as prerequisite. May also mediate N(3)-methylcytidine modification of mRNAs. The existence of N(3)-methylcytidine modification on mRNAs is however unclear, and additional evidences are required to confirm the role of the N(3)-methylcytidine-specific mRNA methyltransferase activity of METTL8 in vivo. In terms of biological role, overexpression in lung progenitor cells stimulates smooth muscle-specific gene expression and suppresses adipogenic gene expression. Functionally, stimulates adipogenesis. The protein is tRNA N(3)-cytidine methyltransferase METTL8, mitochondrial of Mus musculus (Mouse).